Here is a 1149-residue protein sequence, read N- to C-terminus: Polyprotein nsP1234 (1149 aa).

Residues 1-160 enclose the Macro domain; sequence APSYRVRRTD…KIQEAIDRRT (160 aa). Aspartate 10, asparagine 24, glycine 32, glycine 112, valine 113, and phenylalanine 114 together coordinate ADP-D-ribose. Zn(2+) contacts are provided by cysteine 262, cysteine 264, cysteine 287, and cysteine 305. Phosphothreonine; by host is present on threonine 344. 2 short sequence motifs (FGDF; binding to host G3BP1) span residues 512-515 and 523-526; these read FGDF and FGDI. The 116-residue stretch at 903–1018 folds into the RdRp catalytic domain; sequence DAVLETDIAS…HGVRSDPLMA (116 aa).

As to quaternary structure, interacts with mRNA-capping enzyme nsP1. Interacts with host DDX1. RNA-directed Interacts with host DDX3. Interacts (via C-terminus) with host G3BP1; this interaction inhibits the formation of host stress granules on viral mRNAs and the nsp3-G3BP1 complexes bind viral RNAs and probably orchestrate the assembly of viral replication complexes. Interacts (via C-terminus) with host G3BP2; this interaction inhibits the formation of host stress granules on viral mRNAs and the nsp3-G3BP2 complexes bind viral RNAs and probably orchestrate the assembly of viral replication complexes. Interacts with itself. Interacts with mRNA-capping enzyme nsP1. Interacts with protease nsP2. Interacts with itself. The cofactor is Mg(2+). It depends on Mn(2+) as a cofactor. Post-translationally, polyprotein P1234: Specific enzymatic cleavages in vivo yield mature proteins. The processing of the polyprotein is temporally regulated. In early stages (1.7 hpi), P1234 is first cleaved in trans through its nsP2 protease activity, releasing P123' and nsP4, which associate to form the early replication complex. At the same time, P1234 is also cut at the nsP1/nsP2 site early in infection but with lower efficiency. After replication of the viral minus-strand RNAs (4 hpi), the polyproteins are cut at the nsP1/nsP2 and nsP2/nsP3 sites very efficiently, preventing accumulation of P123' and P1234 and allowing the formation of the late replication complex. NsP3'/nsP4 site is not cleaved anymore and P34 is produced rather than nsP4. Specific enzymatic cleavages in vivo yield mature proteins. The processing of the polyprotein is temporally regulated. In early stages (1.7 hpi), P123 is cleaved at the nsP1/nsP2 site with low efficiency. After replication of the viral minus-strand RNAs (4 hpi), the polyproteins are cut at the nsP1/nsP2 and nsP2/nsP3 sites very efficiently, preventing accumulation of P123 and allowing the formation of the late replication complex. In terms of processing, phosphorylated by host on serines and threonines. Post-translationally, ubiquitinated; targets the protein for rapid degradation via the ubiquitin system. Nsp4 is present in extremely low quantities due to low frequency of translation through the amber stop-codon and the degradation by the ubiquitin pathway.

It is found in the host cytoplasmic vesicle membrane. It catalyses the reaction RNA(n) + a ribonucleoside 5'-triphosphate = RNA(n+1) + diphosphate. The enzyme catalyses 4-O-(ADP-D-ribosyl)-L-aspartyl-[protein] + H2O = L-aspartyl-[protein] + ADP-D-ribose + H(+). The catalysed reaction is 5-O-(ADP-D-ribosyl)-L-glutamyl-[protein] + H2O = L-glutamyl-[protein] + ADP-D-ribose + H(+). It carries out the reaction RNA(n) + ATP = RNA(n)-3'-adenine ribonucleotide + diphosphate. It catalyses the reaction ADP-alpha-D-ribose 1''-phosphate + H2O = ADP-D-ribose + phosphate. Functionally, polyprotein P1234: Inactive precursor of the viral replicase, which is activated by cleavages carried out by the viral protease nsP2. In terms of biological role, the early replication complex formed by the polyprotein P123 and nsP4 synthesizes minus-strand RNAs. As soon P123 is cleaved into mature proteins, the plus-strand RNAs synthesis begins. The early replication complex formed by the polyprotein P123' and nsP4 synthesizes minus-strand RNAs. Polyprotein P123' is a short-lived polyprotein that accumulates during early stage of infection. As soon P123' is cleaved into mature proteins, the plus-strand RNAs synthesis begins. Its function is as follows. Seems to be essential for minus-strand RNAs and subgenomic 26S mRNAs synthesis. Displays mono-ADP-ribosylhydrolase activity. ADP-ribosylation is a post-translational modification that controls various processes of the host cell and the virus probably needs to revert it for optimal viral replication. Binds proteins of FXR family and sequesters them into the viral RNA replication complexes thereby inhibiting the formation of host stress granules on viral mRNAs. The nsp3'-FXR complexes bind viral RNAs and probably orchestrate the assembly of viral replication complexes, thanks to the ability of FXR family members to self-assemble and bind DNA. Functionally, seems to be essential for minus-strand RNAs and subgenomic 26S mRNAs synthesis. Displays mono-ADP-ribosylhydrolase activity. ADP-ribosylation is a post-translational modification that controls various processes of the host cell and the virus probably needs to revert it for optimal viral replication. Binds proteins of G3BP family and sequesters them into the viral RNA replication complexes thereby inhibiting the formation of host stress granules on viral mRNAs. The nsp3-G3BP complexes bind viral RNAs and probably orchestrate the assembly of viral replication complexes, thanks to the ability of G3BP family members to self-assemble and bind DNA. In terms of biological role, RNA dependent RNA polymerase. Replicates genomic and antigenomic RNA by recognizing replications specific signals. The early replication complex formed by the polyprotein P123 and nsP4 synthesizes minus-strand RNAs. The late replication complex composed of fully processed nsP1-nsP4 is responsible for the production of genomic and subgenomic plus-strand RNAs. This is Polyprotein nsP1234 from Ross river virus (strain T48) (RRV).